Here is a 618-residue protein sequence, read N- to C-terminus: Keratin, type I cytoskeletal 9 (618 aa).

Positions Met-1–Ser-49 are disordered. The segment at Met-1–Asn-137 is head. The span at Ser-7–Ser-16 shows a compositional bias: low complexity. 2 positions are modified to phosphoserine: Ser-14 and Ser-17. Residues Ser-17–Ala-26 show a composition bias toward gly residues. Over residues Ser-27 to Ser-49 the composition is skewed to low complexity. The segment at Glu-138–Trp-173 is coil 1A. The IF rod domain maps to Glu-138 to Phe-450. A linker 1 region spans residues Tyr-174 to Thr-192. A coil 1B region spans residues Ile-193–Leu-284. The interval Thr-285–Val-307 is linker 12. The segment at Leu-308–Gly-446 is coil 2. The tract at residues Gln-447–Ser-609 is tail. The segment at Asp-449 to Arg-618 is disordered. The segment covering Gly-456–Asn-603 has biased composition (gly residues). The segment covering Ser-607–Arg-618 has biased composition (low complexity).

It belongs to the intermediate filament family. As to quaternary structure, heterotetramer of two type I and two type II keratins. As to expression, expressed in the perinuclear ring of spermatid manchettes within testis and in keratinocytes of the suprabasal layer of footpad epidermis (at protein level).

Functionally, may serve an important special function either in the mature palmar and plantar skin tissue or in the morphogenetic program of the formation of these tissues. Plays a role in keratin filament assembly. May be involved in spermatid nuclear shaping and sperm development. This chain is Keratin, type I cytoskeletal 9 (Krt9), found in Rattus norvegicus (Rat).